A 1486-amino-acid polypeptide reads, in one-letter code: Chromosome partition protein MukB (1486 aa).

34–41 (GGNGAGKS) contacts ATP. 3 coiled-coil regions span residues 326–418 (LEAD…QYNQ), 444–480 (LETF…QAYQ), and 509–603 (RHLA…RAPV). The interval 666-783 (PGGSEDQRLN…EVPLFGRAAR (118 aa)) is flexible hinge. 3 coiled-coil regions span residues 835–923 (EAEI…AKLE), 977–1115 (EMLS…TAKA), and 1209–1266 (VEAI…QNVS).

Belongs to the SMC family. MukB subfamily. Homodimerization via its hinge domain. Binds to DNA via its C-terminal region. Interacts, and probably forms a ternary complex, with MukE and MukF via its C-terminal region. The complex formation is stimulated by calcium or magnesium. Interacts with tubulin-related protein FtsZ.

It localises to the cytoplasm. Its subcellular location is the nucleoid. Functionally, plays a central role in chromosome condensation, segregation and cell cycle progression. Functions as a homodimer, which is essential for chromosome partition. Involved in negative DNA supercoiling in vivo, and by this means organize and compact chromosomes. May achieve or facilitate chromosome segregation by condensation DNA from both sides of a centrally located replisome during cell division. This chain is Chromosome partition protein MukB, found in Escherichia coli (strain SMS-3-5 / SECEC).